A 292-amino-acid chain; its full sequence is ATP synthase gamma chain (292 aa).

The protein belongs to the ATPase gamma chain family. As to quaternary structure, F-type ATPases have 2 components, CF(1) - the catalytic core - and CF(0) - the membrane proton channel. CF(1) has five subunits: alpha(3), beta(3), gamma(1), delta(1), epsilon(1). CF(0) has three main subunits: a, b and c.

Its subcellular location is the cell inner membrane. Its function is as follows. Produces ATP from ADP in the presence of a proton gradient across the membrane. The gamma chain is believed to be important in regulating ATPase activity and the flow of protons through the CF(0) complex. The sequence is that of ATP synthase gamma chain from Nitrobacter hamburgensis (strain DSM 10229 / NCIMB 13809 / X14).